The following is a 397-amino-acid chain: Acetate kinase (397 aa).

Asn7 provides a ligand contact to Mg(2+). Lys14 contributes to the ATP binding site. Arg90 provides a ligand contact to substrate. Asp147 functions as the Proton donor/acceptor in the catalytic mechanism. ATP is bound by residues 207-211 (HLGNG), 282-284 (DFR), and 330-334 (GIGEN). Residue Glu384 participates in Mg(2+) binding.

It belongs to the acetokinase family. As to quaternary structure, homodimer. Requires Mg(2+) as cofactor. The cofactor is Mn(2+).

The protein resides in the cytoplasm. The enzyme catalyses acetate + ATP = acetyl phosphate + ADP. Its pathway is metabolic intermediate biosynthesis; acetyl-CoA biosynthesis; acetyl-CoA from acetate: step 1/2. Catalyzes the formation of acetyl phosphate from acetate and ATP. Can also catalyze the reverse reaction. This is Acetate kinase from Agathobacter rectalis (strain ATCC 33656 / DSM 3377 / JCM 17463 / KCTC 5835 / VPI 0990) (Eubacterium rectale).